Here is a 365-residue protein sequence, read N- to C-terminus: Crh-like protein ARB_03382 (365 aa).

The signal sequence occupies residues methionine 1–alanine 25. The Extracellular segment spans residues glutamine 26–lysine 302. Cysteine 31 and cysteine 39 form a disulfide bridge. 4 N-linked (GlcNAc...) asparagine glycosylation sites follow: asparagine 48, asparagine 54, asparagine 63, and asparagine 77. The 194-residue stretch at threonine 50 to valine 243 folds into the GH16 domain. Glutamate 125 serves as the catalytic Nucleophile. The active-site Proton donor is the glutamate 129. Glutamate 129 is a chitin binding site. Residues asparagine 147 and asparagine 168 are each glycosylated (N-linked (GlcNAc...) asparagine). The chitin site is built by arginine 209 and tryptophan 213. A helical membrane pass occupies residues isoleucine 303–cysteine 323. Topologically, residues cysteine 324 to serine 365 are cytoplasmic.

It belongs to the glycosyl hydrolase 16 family. CRH1 subfamily.

It is found in the membrane. The enzyme catalyses Random endo-hydrolysis of N-acetyl-beta-D-glucosaminide (1-&gt;4)-beta-linkages in chitin and chitodextrins.. In terms of biological role, dual chitinase/transglycosylase that plays a role in cell wall architecture. Chitinase and transglycosylase activities are coupled. Required for the polysaccharide cross-linking at the septa and the cell wall. More specifically, transfers chitin to 1,6-beta-glucan in the cell wall. Plays an important role in fungal pathogenesis. Involved in cell wall assembly and regeneration, filamentation, and adherence to host cells. The protein is Crh-like protein ARB_03382 of Arthroderma benhamiae (strain ATCC MYA-4681 / CBS 112371) (Trichophyton mentagrophytes).